A 612-amino-acid chain; its full sequence is MAFTIEVEEWVGSVWHRFITRRASPDFPEARVDLESMQRSLSLMFRAMGGASGVGVEAASARDLVLRRNLLQQVAGTCMQLPVAWCDSSNLRLPQSLAVYPEVSLNQDLYRWLALIAAQAGQMRHWARDNQRWTQALLEQFPAMRPRYQRLVEAHLQLRPDPKQLPKAEAALEAALCQALREPGSVSQFPRCERAPWPLSLWLYPAENLGEPQAVYRVEEGEGDLETPPSGQSRQRNGARRVDDSSSKGGLLLFRLENLFSWSEHVELDRCDDDTEDLDAARVRGPRRTGSVAPRMRQGGGLKLDLDLPASDFDDVPLGEGIKLPEWNYRKQCLQKDFVNLQMMLPCGSEPKPLPLRLSPLARRLRRQFEHLRNDRQWLRQQPQGSELDMQAWLDFHVERQNGQCAERGLFMEQRQNRRDLACLLLADLSMSTDAHLDNEHRVIDVVIDSLLLFGERLSAVGDPFALYGFSSLRRQQVRMQELKSFRQPYGDETRGRIQALKPGYYTRMGAAIRQATELLGNCKQRRKLLLLVTDGKPNDLDLYEGRYGVEDTRQAVMEARRQGLLPFCITIDREAGDYLPYMFGANGYTLIKEPQQSAFPPAAAVQATDPA.

The disordered stretch occupies residues 220-246; that stretch reads EGEGDLETPPSGQSRQRNGARRVDDSS. A VWFA domain is found at 420–609; it reads DLACLLLADL…FPPAAAVQAT (190 aa).

In terms of biological role, component of the anaerobic respiratory chain that transforms nitrate to dinitrogen (denitrification). The protein is Protein NorD (norD) of Stutzerimonas stutzeri (Pseudomonas stutzeri).